Here is a 409-residue protein sequence, read N- to C-terminus: PPE family protein PPE32 (409 aa).

The protein belongs to the mycobacterial PPE family. Interacts with host Toll-like receptor 2 (TLR2).

The protein resides in the secreted. The protein localises to the cell wall. It localises to the cell surface. Functionally, virulence factor that modulates the production of host cytokines. The chain is PPE family protein PPE32 from Mycobacterium tuberculosis (strain CDC 1551 / Oshkosh).